A 67-amino-acid polypeptide reads, in one-letter code: Large ribosomal subunit protein bL31 (67 aa).

This sequence belongs to the bacterial ribosomal protein bL31 family. Type A subfamily. Part of the 50S ribosomal subunit.

Functionally, binds the 23S rRNA. The sequence is that of Large ribosomal subunit protein bL31 from Leptospira borgpetersenii serovar Hardjo-bovis (strain JB197).